We begin with the raw amino-acid sequence, 512 residues long: MSLSDKELFELNKKAVTEGFKIKPRINYNTVGGVNGPLVILDNVKFPRYNEIVNLTLPDGSVRQGQVLEVRGTKAIVQVFEGTSGIDVKKTRVEFTGENLKIPVSEDMLGRIFDGSGRPIDKGPKIFAEDYLDINGSPINPYARIYPEEMISTGVSAIDTMNSIARGQKIPIFSASGLPHNEIAAQICRQAGLVRPTKDVHDGHEENFSIVFAAMGVNLETSRFFKQDFEENGSLERTTLFLNLANDPTIERIITPRLALTTAEFLAYQTERHVLTILTDMSSYADALREVSAAREEVPGRRGYPGYMYTDLSTIYERAGRVEGRNGSITQVPILTMPNDDITHPIPDLTGYITEGQIFIDRQLHNRGIYPPINVLPSLSRLMKSAIGEGMTRKDHGDVSNQLYAKYAIGKDAAAMKAVVGEEALSTEDKLSLEFLEKFEKNFISQGAYENRSIFESLDLAWSLLRIYPKELLNRISPKILEELYGRDREQDDDEDEDEEDPDKSGDKLIDA.

Arg-381 is an ATP binding site. The interval 484 to 512 is disordered; that stretch reads LYGRDREQDDDEDEDEEDPDKSGDKLIDA. Over residues 491-502 the composition is skewed to acidic residues; sequence QDDDEDEDEEDP. The span at 503–512 shows a compositional bias: basic and acidic residues; sequence DKSGDKLIDA.

It belongs to the ATPase alpha/beta chains family. As to quaternary structure, V-ATPase is a heteromultimeric enzyme composed of a peripheral catalytic V1 complex (components A to H) attached to an integral membrane V0 proton pore complex (components: a, c, c', c'', d, e, f and VOA1).

The protein localises to the vacuole membrane. In terms of biological role, non-catalytic subunit of the V1 complex of vacuolar(H+)-ATPase (V-ATPase), a multisubunit enzyme composed of a peripheral complex (V1) that hydrolyzes ATP and a membrane integral complex (V0) that translocates protons. Plays an important role in resistance to several stresses, as well as in autophagy and virulence. The protein is V-type proton ATPase subunit B of Candida albicans (strain SC5314 / ATCC MYA-2876) (Yeast).